We begin with the raw amino-acid sequence, 201 residues long: Fimbrial protein FimX (201 aa).

The signal sequence occupies residues M1–A21. C37 and C79 are joined by a disulfide.

The protein belongs to the fimbrial protein family.

It is found in the fimbrium. Bordetella pertussis is the causative agent of whooping cough. An essential step in the disease process is the attachment of the bacteria to the ciliated epithelium of the respiratory tract, enabling the organism to resist normal host-clearance mechanisms. It is unclear which bacterial cell surface component are responsible for adherence but the fimbriae of B.pertussis are prime candidates for being involved in this process. This chain is Fimbrial protein FimX (fimX), found in Bordetella pertussis (strain Tohama I / ATCC BAA-589 / NCTC 13251).